A 344-amino-acid chain; its full sequence is Phenylalanine--tRNA ligase alpha subunit (344 aa).

Residue Glu256 coordinates Mg(2+).

It belongs to the class-II aminoacyl-tRNA synthetase family. Phe-tRNA synthetase alpha subunit type 1 subfamily. As to quaternary structure, tetramer of two alpha and two beta subunits. Mg(2+) is required as a cofactor.

Its subcellular location is the cytoplasm. The enzyme catalyses tRNA(Phe) + L-phenylalanine + ATP = L-phenylalanyl-tRNA(Phe) + AMP + diphosphate + H(+). This chain is Phenylalanine--tRNA ligase alpha subunit, found in Geobacillus thermodenitrificans (strain NG80-2).